We begin with the raw amino-acid sequence, 223 residues long: Thiamine-phosphate synthase (223 aa).

4-amino-2-methyl-5-(diphosphooxymethyl)pyrimidine contacts are provided by residues 45–49 (QYREK) and Asn-77. Mg(2+) is bound by residues Asp-78 and Asp-97. 4-amino-2-methyl-5-(diphosphooxymethyl)pyrimidine is bound at residue Thr-116. Position 142–144 (142–144 (SYT)) interacts with 2-[(2R,5Z)-2-carboxy-4-methylthiazol-5(2H)-ylidene]ethyl phosphate. Lys-145 provides a ligand contact to 4-amino-2-methyl-5-(diphosphooxymethyl)pyrimidine. 2-[(2R,5Z)-2-carboxy-4-methylthiazol-5(2H)-ylidene]ethyl phosphate is bound by residues Gly-173 and 193–194 (VT).

This sequence belongs to the thiamine-phosphate synthase family. Requires Mg(2+) as cofactor.

The enzyme catalyses 2-[(2R,5Z)-2-carboxy-4-methylthiazol-5(2H)-ylidene]ethyl phosphate + 4-amino-2-methyl-5-(diphosphooxymethyl)pyrimidine + 2 H(+) = thiamine phosphate + CO2 + diphosphate. The catalysed reaction is 2-(2-carboxy-4-methylthiazol-5-yl)ethyl phosphate + 4-amino-2-methyl-5-(diphosphooxymethyl)pyrimidine + 2 H(+) = thiamine phosphate + CO2 + diphosphate. It catalyses the reaction 4-methyl-5-(2-phosphooxyethyl)-thiazole + 4-amino-2-methyl-5-(diphosphooxymethyl)pyrimidine + H(+) = thiamine phosphate + diphosphate. It functions in the pathway cofactor biosynthesis; thiamine diphosphate biosynthesis; thiamine phosphate from 4-amino-2-methyl-5-diphosphomethylpyrimidine and 4-methyl-5-(2-phosphoethyl)-thiazole: step 1/1. In terms of biological role, condenses 4-methyl-5-(beta-hydroxyethyl)thiazole monophosphate (THZ-P) and 2-methyl-4-amino-5-hydroxymethyl pyrimidine pyrophosphate (HMP-PP) to form thiamine monophosphate (TMP). This Dictyoglomus turgidum (strain DSM 6724 / Z-1310) protein is Thiamine-phosphate synthase.